Consider the following 1393-residue polypeptide: DNA-directed RNA polymerase subunit beta' (1393 aa).

Residues Cys72, Cys74, Cys87, and Cys90 each contribute to the Zn(2+) site. Residues Asp463, Asp465, and Asp467 each contribute to the Mg(2+) site. Residues Cys812, Cys887, Cys894, and Cys897 each contribute to the Zn(2+) site.

This sequence belongs to the RNA polymerase beta' chain family. The RNAP catalytic core consists of 2 alpha, 1 beta, 1 beta' and 1 omega subunit. When a sigma factor is associated with the core the holoenzyme is formed, which can initiate transcription. Mg(2+) serves as cofactor. Requires Zn(2+) as cofactor.

The catalysed reaction is RNA(n) + a ribonucleoside 5'-triphosphate = RNA(n+1) + diphosphate. In terms of biological role, DNA-dependent RNA polymerase catalyzes the transcription of DNA into RNA using the four ribonucleoside triphosphates as substrates. The sequence is that of DNA-directed RNA polymerase subunit beta' from Chlamydia abortus (strain DSM 27085 / S26/3) (Chlamydophila abortus).